The primary structure comprises 65 residues: Large ribosomal subunit protein uL29 (65 aa).

Belongs to the universal ribosomal protein uL29 family.

In Dehalococcoides mccartyi (strain ATCC BAA-2100 / JCM 16839 / KCTC 5957 / BAV1), this protein is Large ribosomal subunit protein uL29.